The sequence spans 344 residues: Ferrochelatase (344 aa).

Fe cation contacts are provided by His214 and Glu295.

The protein belongs to the ferrochelatase family.

The protein resides in the cytoplasm. The enzyme catalyses heme b + 2 H(+) = protoporphyrin IX + Fe(2+). It participates in porphyrin-containing compound metabolism; protoheme biosynthesis; protoheme from protoporphyrin-IX: step 1/1. In terms of biological role, catalyzes the ferrous insertion into protoporphyrin IX. The chain is Ferrochelatase from Rhizobium etli (strain CIAT 652).